Here is a 119-residue protein sequence, read N- to C-terminus: NLVQFSYLIQCANHGKRPTWHYMDYGCYCGAGGSGTPVDELDRCCKIHDDCYDEAGKKGCFPKMSAYDYYCGENGPYCRNIKKKCLRFVCDCDVEAAFCFAKAPYNNANWNIDTKKRCQ.

7 disulfides stabilise this stretch: Cys-11-Cys-71, Cys-27-Cys-118, Cys-29-Cys-45, Cys-44-Cys-99, Cys-51-Cys-92, Cys-60-Cys-85, and Cys-78-Cys-90. 3 residues coordinate Ca(2+): Tyr-28, Gly-30, and Gly-32. The active site involves His-48. Position 49 (Asp-49) interacts with Ca(2+). The active site involves Asp-93.

The protein belongs to the phospholipase A2 family. Group I subfamily. D49 sub-subfamily. As to quaternary structure, monomer. Ca(2+) is required as a cofactor. In terms of tissue distribution, expressed by the venom gland.

It is found in the secreted. It carries out the reaction a 1,2-diacyl-sn-glycero-3-phosphocholine + H2O = a 1-acyl-sn-glycero-3-phosphocholine + a fatty acid + H(+). In terms of biological role, snake venom phospholipase A2 (PLA2) that inhibits neuromuscular transmission by blocking acetylcholine release from the nerve termini. Is directly toxic to skeletal muscle upon local application in vivo (dystrophic effect). Also has direct nephrotoxicity in experimental mice; a single subcutaneous dose (1.38 ug/kg) produces renal tubular and glomerular damage within 24 hours. PLA2 catalyzes the calcium-dependent hydrolysis of the 2-acyl groups in 3-sn-phosphoglycerides. In Notechis scutatus scutatus (Mainland tiger snake), this protein is Basic phospholipase A2 notexin.